A 328-amino-acid polypeptide reads, in one-letter code: dITP/XTP pyrophosphatase (328 aa).

A unknown region spans residues 1–129; the sequence is MSEKIYEYKD…ATSEQGFGDI (129 aa). The tract at residues 130–324 is NTP pyrophosphatase; sequence ILIATRNEGK…KLMEVFPAWQ (195 aa). A substrate-binding site is contributed by 134–139; it reads TRNEGK. Residue Asp196 is the Proton acceptor of the active site. Asp196 is a Mg(2+) binding site. Residues Ser197, 280–283, Lys303, and 308–309 each bind substrate; these read FGYD and HR.

It belongs to the HAM1 NTPase family. In terms of assembly, homodimer. It depends on Mg(2+) as a cofactor.

It catalyses the reaction XTP + H2O = XMP + diphosphate + H(+). It carries out the reaction dITP + H2O = dIMP + diphosphate + H(+). The catalysed reaction is ITP + H2O = IMP + diphosphate + H(+). Functionally, pyrophosphatase that catalyzes the hydrolysis of nucleoside triphosphates to their monophosphate derivatives, with a high preference for the non-canonical purine nucleotides XTP (xanthosine triphosphate), dITP (deoxyinosine triphosphate) and ITP. Seems to function as a house-cleaning enzyme that removes non-canonical purine nucleotides from the nucleotide pool, thus preventing their incorporation into DNA/RNA and avoiding chromosomal lesions. This Streptococcus pyogenes serotype M3 (strain ATCC BAA-595 / MGAS315) protein is dITP/XTP pyrophosphatase.